The primary structure comprises 161 residues: Endoribonuclease YbeY (161 aa).

Residues His-127, His-131, and His-137 each contribute to the Zn(2+) site.

The protein belongs to the endoribonuclease YbeY family. Zn(2+) serves as cofactor.

It localises to the cytoplasm. Functionally, single strand-specific metallo-endoribonuclease involved in late-stage 70S ribosome quality control and in maturation of the 3' terminus of the 16S rRNA. The polypeptide is Endoribonuclease YbeY (Listeria welshimeri serovar 6b (strain ATCC 35897 / DSM 20650 / CCUG 15529 / CIP 8149 / NCTC 11857 / SLCC 5334 / V8)).